A 305-amino-acid chain; its full sequence is Tyrosine recombinase XerC (305 aa).

The 92-residue stretch at 4-95 (TSIQELINKW…AVKNFYKFLE (92 aa)) folds into the Core-binding (CB) domain. The Tyr recombinase domain maps to 116–298 (LLPKSLSEDD…SIKHLVSVYT (183 aa)). Catalysis depends on residues arginine 159, lysine 182, histidine 250, arginine 253, and histidine 276. Tyrosine 285 (O-(3'-phospho-DNA)-tyrosine intermediate) is an active-site residue.

The protein belongs to the 'phage' integrase family. XerC subfamily. As to quaternary structure, forms a cyclic heterotetrameric complex composed of two molecules of XerC and two molecules of XerD.

It localises to the cytoplasm. Site-specific tyrosine recombinase, which acts by catalyzing the cutting and rejoining of the recombining DNA molecules. The XerC-XerD complex is essential to convert dimers of the bacterial chromosome into monomers to permit their segregation at cell division. It also contributes to the segregational stability of plasmids. This chain is Tyrosine recombinase XerC, found in Rickettsia canadensis (strain McKiel).